Reading from the N-terminus, the 393-residue chain is MQQTKKLTQSDIIIAVMSGPFLQRGEPALISKWYRTKMALANGVDLVVELPYVFATQKAETFANGAISILNALRVSEICFGSEDGQIENFYNTISIQKNEEETFNCLVKQFMDAGNSYAKATSDAFSHILTSEKNIDMSQPNNILGFQYMKAILSQNSSIQAQTIKRFASHYHDETFNDQHIASATSIRKQLFSEEGSFTTIEPFLPQATTSLLANYKQNYGILHNWEQYFSFFKYRLMTMSPGDLRHIYEIEEGLEHRILSKIQNSSSFYSFMEALKTKRYTWTRLQRACTHILTNTTKEDIRSANIEQHAPYIRLLGMSQKGQTYLSKNKKKIELPILTHTKTFDHVALDIEKKANSVYFSIMHEPLRTQLLKQDITHHPIRYDETTTKFL.

ATP contacts are provided by glycine 81, asparagine 142, and arginine 167.

Belongs to the TmcAL family.

It localises to the cytoplasm. The catalysed reaction is cytidine(34) in elongator tRNA(Met) + acetate + ATP = N(4)-acetylcytidine(34) in elongator tRNA(Met) + AMP + diphosphate. In terms of biological role, catalyzes the formation of N(4)-acetylcytidine (ac(4)C) at the wobble position of elongator tRNA(Met), using acetate and ATP as substrates. First activates an acetate ion to form acetyladenylate (Ac-AMP) and then transfers the acetyl group to tRNA to form ac(4)C34. The polypeptide is tRNA(Met) cytidine acetate ligase (Bacillus cereus (strain ATCC 14579 / DSM 31 / CCUG 7414 / JCM 2152 / NBRC 15305 / NCIMB 9373 / NCTC 2599 / NRRL B-3711)).